We begin with the raw amino-acid sequence, 65 residues long: Large ribosomal subunit protein bL35 (65 aa).

It belongs to the bacterial ribosomal protein bL35 family.

The protein is Large ribosomal subunit protein bL35 of Buchnera aphidicola subsp. Acyrthosiphon pisum (strain 5A).